Here is a 192-residue protein sequence, read N- to C-terminus: Transmembrane protein 276 (192 aa).

The first 32 residues, 1 to 32 (MVSKPRTEWSTVLSHLVLAGVSLHAAVSSVQS), serve as a signal peptide directing secretion. The next 4 helical transmembrane spans lie at 35-55 (GAAAGFLLQTFAAIIMLAPGP), 63-83 (AGAWVATVIGLPLLAFDFHWV), 92-112 (LLLGGGMVLAVAGDHLGPEGC), and 114-134 (VAGQAVLLVVAVTILIVAVFT).

It localises to the membrane. This is Transmembrane protein 276 from Mus musculus (Mouse).